Here is a 405-residue protein sequence, read N- to C-terminus: uncharacterized protein (405 aa).

Over 1-18 (MPEPVAEPALNGLRLNLR) the chain is Cytoplasmic. Residues 19–39 (IVSIVMFNFASYLTIGLPLAV) traverse the membrane as a helical segment. The Periplasmic segment spans residues 40-46 (LPGYVHD). The chain crosses the membrane as a helical span at residues 47–67 (VMGFSAFWAGLVISLQYFATL). Residues 68-84 (LSRPHAGRYADSLGPKK) lie on the Cytoplasmic side of the membrane. A helical transmembrane segment spans residues 85–105 (IVVFGLCGCFLSGLGYLTAGL). Position 106 (Thr-106) is a topological domain, periplasmic. Residues 107–127 (ASLPVISLLLLCLGRVILGIG) form a helical membrane-spanning segment. The Cytoplasmic portion of the chain corresponds to 128-155 (QSFAGTGSTLWGVGVVGSLHIGRVISWN). A helical transmembrane segment spans residues 156-176 (GIVTYGAMAMGAPLGVVFYHW). Residue Gly-177 is a topological domain, periplasmic. The helical transmembrane segment at 178–198 (GLQALALIIMGVALVAILLAI) threads the bilayer. Over 199–223 (PRPTVKASKGKPLPFRAVLGRVWLY) the chain is Cytoplasmic. Residues 224 to 244 (GMALALASAGFGVIATFITLF) traverse the membrane as a helical segment. The Periplasmic segment spans residues 245–251 (YDAKGWD). The helical transmembrane segment at 252–272 (GAAFALTLFSCAFVGTRLLFP) threads the bilayer. At 273 to 282 (NGINRIGGLN) the chain is on the cytoplasmic side. The helical transmembrane segment at 283–303 (VAMICFSVEIIGLLLVGVATM) threads the bilayer. Topologically, residues 304 to 308 (PWMAK) are periplasmic. The chain crosses the membrane as a helical span at residues 309 to 329 (IGVLLAGAGFSLVFPALGVVA). Topologically, residues 330 to 343 (VKAVPQQNQGAALA) are cytoplasmic. The chain crosses the membrane as a helical span at residues 344 to 364 (TYTVFMDLSLGVTGPLAGLVM). A topological domain (periplasmic) is located at residue Ser-365. The helical transmembrane segment at 366–386 (WAGVPVIYLAAAGLVAIALLL) threads the bilayer. The Cytoplasmic portion of the chain corresponds to 387–405 (TWRLKKRPPEHVPEAASSS).

This sequence belongs to the major facilitator superfamily. YhhS family.

It localises to the cell inner membrane. Its function is as follows. Confers high-level resistance to glyphosate when overexpressed. Overexpression has no effect on intracellular arabinose concentrations. This is an uncharacterized protein from Escherichia coli (strain K12).